A 441-amino-acid chain; its full sequence is TIGSICMVIGIVSLMLQIGNMISIWVSHSIQTGNQNQVEPISNTNFLTEKAVASVTLAGNSSLCPIRGWAVHSKDNSIRIGSKGDVFVIREPFISCSHLECRTFFLTQGALLNDKHSNGTVKDRSPHRTLMSCPVGEAPSPYNSRFESVAWSASACHDGTSWLTIGISGPDNGAVAVLKYNGMITDTIKSWRNNILRTQESECACVNGSCFTVMTDGPSNGQASYKIFKMEKGKVVKSVELDAPNYHYEECSCYPDAGEITCVCRDNWHGSNRPWVSFNQNLEYQIGYICSGVFGDNPRPNDGTGSCGPVSPNGAYGVKGFSFKYGNGVWIGRTKSPNSRSGFEMIWDPNGWTETDSSFSVKQDIVAITDWSGYSGSFVQHPELTGLDCIRPCFWVELIRGRPKESTIWTSGSSISFCGVNSDTVSWSWPDGAELPFTIDK.

At 1–4 (TIGS) the chain is on the intravirion side. The interval 3-25 (GSICMVIGIVSLMLQIGNMISIW) is involved in apical transport and lipid raft association. The helical transmembrane segment at 5–25 (ICMVIGIVSLMLQIGNMISIW) threads the bilayer. Residues 26 to 441 (VSHSIQTGNQ…GAELPFTIDK (416 aa)) lie on the Virion surface side of the membrane. The hypervariable stalk region stretch occupies residues 28–62 (HSIQTGNQNQVEPISNTNFLTEKAVASVTLAGNSS). N-linked (GlcNAc...) asparagine; by host glycosylation is present at Asn60. A head of neuraminidase region spans residues 63–441 (LCPIRGWAVH…GAELPFTIDK (379 aa)). Disulfide bonds link Cys64–Cys389, Cys96–Cys101, Cys156–Cys203, Cys205–Cys210, Cys251–Cys264, Cys253–Cys262, Cys290–Cys307, and Cys393–Cys418. A substrate-binding site is contributed by Arg90. Asn118 carries an N-linked (GlcNAc...) asparagine; by host glycan. Asp123 serves as the catalytic Proton donor/acceptor. Residue Arg124 coordinates substrate. Asn207 is a glycosylation site (N-linked (GlcNAc...) asparagine; by host). 249–250 (EE) contributes to the substrate binding site. Residue Arg265 coordinates substrate. 3 residues coordinate Ca(2+): Asp266, Gly270, and Asp296. Residue Arg340 coordinates substrate. Tyr374 functions as the Nucleophile in the catalytic mechanism.

This sequence belongs to the glycosyl hydrolase 34 family. As to quaternary structure, homotetramer. The cofactor is Ca(2+). In terms of processing, N-glycosylated.

It is found in the virion membrane. The protein resides in the host apical cell membrane. It catalyses the reaction Hydrolysis of alpha-(2-&gt;3)-, alpha-(2-&gt;6)-, alpha-(2-&gt;8)- glycosidic linkages of terminal sialic acid residues in oligosaccharides, glycoproteins, glycolipids, colominic acid and synthetic substrates.. Inhibited by the neuraminidase inhibitors zanamivir (Relenza) and oseltamivir (Tamiflu). These drugs interfere with the release of progeny virus from infected cells and are effective against all influenza strains. Resistance to neuraminidase inhibitors is quite rare. Its function is as follows. Catalyzes the removal of terminal sialic acid residues from viral and cellular glycoconjugates. Cleaves off the terminal sialic acids on the glycosylated HA during virus budding to facilitate virus release. Additionally helps virus spread through the circulation by further removing sialic acids from the cell surface. These cleavages prevent self-aggregation and ensure the efficient spread of the progeny virus from cell to cell. Otherwise, infection would be limited to one round of replication. Described as a receptor-destroying enzyme because it cleaves a terminal sialic acid from the cellular receptors. May facilitate viral invasion of the upper airways by cleaving the sialic acid moieties on the mucin of the airway epithelial cells. Likely to plays a role in the budding process through its association with lipid rafts during intracellular transport. May additionally display a raft-association independent effect on budding. Plays a role in the determination of host range restriction on replication and virulence. Sialidase activity in late endosome/lysosome traffic seems to enhance virus replication. The protein is Neuraminidase of Aves (Cat).